The chain runs to 179 residues: Bifunctional protein PyrR (179 aa).

Substrate contacts are provided by residues 39-40 (RR), 101-109 (DDVLFTGRT), arginine 134, and valine 158. The PRPP-binding motif lies at 97–109 (VILIDDVLFTGRT).

The protein belongs to the purine/pyrimidine phosphoribosyltransferase family. PyrR subfamily.

It catalyses the reaction UMP + diphosphate = 5-phospho-alpha-D-ribose 1-diphosphate + uracil. Regulates the transcription of the pyrimidine nucleotide (pyr) operon in response to exogenous pyrimidines. Its function is as follows. Also displays a weak uracil phosphoribosyltransferase activity which is not physiologically significant. The polypeptide is Bifunctional protein PyrR (Haemophilus ducreyi (strain 35000HP / ATCC 700724)).